A 100-amino-acid polypeptide reads, in one-letter code: Urease subunit gamma (100 aa).

This sequence belongs to the urease gamma subunit family. Heterotrimer of UreA (gamma), UreB (beta) and UreC (alpha) subunits. Three heterotrimers associate to form the active enzyme.

The protein resides in the cytoplasm. It catalyses the reaction urea + 2 H2O + H(+) = hydrogencarbonate + 2 NH4(+). It participates in nitrogen metabolism; urea degradation; CO(2) and NH(3) from urea (urease route): step 1/1. The chain is Urease subunit gamma from Parasynechococcus marenigrum (strain WH8102).